Here is a 254-residue protein sequence, read N- to C-terminus: Alcohol dehydrogenase (254 aa).

10–33 (FVAGLGGIGLDTSREIVKSGPKNL) is a binding site for NAD(+). Substrate is bound at residue Ser-138. Tyr-151 (proton acceptor) is an active-site residue.

The protein belongs to the short-chain dehydrogenases/reductases (SDR) family. As to quaternary structure, homodimer.

The catalysed reaction is a primary alcohol + NAD(+) = an aldehyde + NADH + H(+). The enzyme catalyses a secondary alcohol + NAD(+) = a ketone + NADH + H(+). This chain is Alcohol dehydrogenase (Adh), found in Drosophila flavomontana (Fruit fly).